We begin with the raw amino-acid sequence, 371 residues long: uncharacterized protein (371 aa).

The interval 339 to 371 (KVTHEDLVKNRPRSPVRPPIPATAKTPDLPERH) is disordered.

This is an uncharacterized protein from Escherichia coli (strain K12).